We begin with the raw amino-acid sequence, 143 residues long: MKVEIYTDGACKGNPGPGGWGVLLRYNGREKTLHGGEAQTTNNRMELMAAIKGLEALKRPCEVDLYTDSQYLQQGMKEWIKTWKRNGWRNSKKELVKNAELWKSLDNLASIHNIHWHWVKGHSGHLENDLVDALANLGIEELS.

In terms of domain architecture, RNase H type-1 spans 1-140 (MKVEIYTDGA…VDALANLGIE (140 aa)). Mg(2+) contacts are provided by D8, E46, D68, and D132.

It belongs to the RNase H family. In terms of assembly, monomer. Mg(2+) serves as cofactor.

Its subcellular location is the cytoplasm. It catalyses the reaction Endonucleolytic cleavage to 5'-phosphomonoester.. Its function is as follows. Endonuclease that specifically degrades the RNA of RNA-DNA hybrids. The polypeptide is Ribonuclease H (Legionella pneumophila (strain Paris)).